A 62-amino-acid polypeptide reads, in one-letter code: uncharacterized protein (62 aa).

This is an uncharacterized protein from Mesomycoplasma hyorhinis (Mycoplasma hyorhinis).